The following is a 183-amino-acid chain: Ubiquitin-conjugating enzyme E2 H (183 aa).

Residues 1–150 (MSSPSPGKRR…IKEYIQKYAT (150 aa)) form the UBC core domain. Lys60 carries the N6-acetyllysine modification. Residue Cys87 is the Glycyl thioester intermediate of the active site. Positions 152–183 (EALKEQEEGTGDSSSESSMSDFSEDEAQDMEL) are disordered. Residues 163–172 (DSSSESSMSD) show a composition bias toward low complexity. Residues 173-183 (FSEDEAQDMEL) show a composition bias toward acidic residues.

It belongs to the ubiquitin-conjugating enzyme family. Interacts with MAEA and WDR26, components of the CTLH complex that contains GID4, RANBP9 and/or RANBP10, MKLN1, MAEA, RMND5A (or alternatively its paralog RMND5B), GID8, ARMC8, WDR26 and YPEL5. In terms of processing, autoubiquitinated in vitro in the presence of NEDD4L.

It catalyses the reaction S-ubiquitinyl-[E1 ubiquitin-activating enzyme]-L-cysteine + [E2 ubiquitin-conjugating enzyme]-L-cysteine = [E1 ubiquitin-activating enzyme]-L-cysteine + S-ubiquitinyl-[E2 ubiquitin-conjugating enzyme]-L-cysteine.. The catalysed reaction is S-ubiquitinyl-[E1 ubiquitin-activating enzyme]-L-cysteine + [acceptor protein]-L-lysine = [E1 ubiquitin-activating enzyme]-L-cysteine + N(6)-monoubiquitinyl-[acceptor protein]-L-lysine.. The protein operates within protein modification; protein ubiquitination. Functionally, accepts ubiquitin from the E1 complex and catalyzes its covalent attachment to other proteins. E2 ubiquitin conjugating enzyme that transfers ubiquitin to MAEA, a core component of the CTLH E3 ubiquitin-protein ligase complex. In vitro catalyzes 'Lys-11'- and 'Lys-48'-linked polyubiquitination. Capable, in vitro, to ubiquitinate histone H2A. This is Ubiquitin-conjugating enzyme E2 H (UBE2H) from Homo sapiens (Human).